A 406-amino-acid chain; its full sequence is S-adenosylmethionine synthase (406 aa).

Residue His-17 coordinates ATP. Residue Asp-19 coordinates Mg(2+). K(+) is bound at residue Glu-45. Residues Glu-58 and Gln-101 each coordinate L-methionine. The flexible loop stretch occupies residues Gln-101–Arg-111. ATP is bound by residues Asp-178–Lys-180, Asp-258, Arg-264–Lys-265, Ala-281, and Lys-285. Asp-258 lines the L-methionine pocket. Lys-289 lines the L-methionine pocket.

Belongs to the AdoMet synthase family. Homotetramer; dimer of dimers. The cofactor is Mg(2+). K(+) serves as cofactor.

The protein localises to the cytoplasm. The catalysed reaction is L-methionine + ATP + H2O = S-adenosyl-L-methionine + phosphate + diphosphate. Its pathway is amino-acid biosynthesis; S-adenosyl-L-methionine biosynthesis; S-adenosyl-L-methionine from L-methionine: step 1/1. In terms of biological role, catalyzes the formation of S-adenosylmethionine (AdoMet) from methionine and ATP. The overall synthetic reaction is composed of two sequential steps, AdoMet formation and the subsequent tripolyphosphate hydrolysis which occurs prior to release of AdoMet from the enzyme. The protein is S-adenosylmethionine synthase of Bifidobacterium longum (strain NCC 2705).